Here is a 310-residue protein sequence, read N- to C-terminus: Ribosomal RNA small subunit methyltransferase H (310 aa).

S-adenosyl-L-methionine-binding positions include 33 to 35 (AGH), Asp53, Tyr83, Asp100, and Gln107.

This sequence belongs to the methyltransferase superfamily. RsmH family.

Its subcellular location is the cytoplasm. The enzyme catalyses cytidine(1402) in 16S rRNA + S-adenosyl-L-methionine = N(4)-methylcytidine(1402) in 16S rRNA + S-adenosyl-L-homocysteine + H(+). Its function is as follows. Specifically methylates the N4 position of cytidine in position 1402 (C1402) of 16S rRNA. This chain is Ribosomal RNA small subunit methyltransferase H, found in Clostridium perfringens (strain ATCC 13124 / DSM 756 / JCM 1290 / NCIMB 6125 / NCTC 8237 / Type A).